The following is a 341-amino-acid chain: Protein-glutamate methylesterase/protein-glutamine glutaminase 2 (341 aa).

The region spanning 7–120 (KTLIVDDSLL…NRDLDSFFSE (114 aa)) is the Response regulatory domain. Residue Asp58 is modified to 4-aspartylphosphate. The region spanning 155-341 (VIAIGASTGG…QALYKLINQL (187 aa)) is the CheB-type methylesterase domain. Residues Ser161, His187, and Asp283 contribute to the active site.

This sequence belongs to the CheB family. Phosphorylated by CheA. Phosphorylation of the N-terminal regulatory domain activates the methylesterase activity.

It localises to the cytoplasm. It carries out the reaction [protein]-L-glutamate 5-O-methyl ester + H2O = L-glutamyl-[protein] + methanol + H(+). The enzyme catalyses L-glutaminyl-[protein] + H2O = L-glutamyl-[protein] + NH4(+). Functionally, involved in chemotaxis. Part of a chemotaxis signal transduction system that modulates chemotaxis in response to various stimuli. Catalyzes the demethylation of specific methylglutamate residues introduced into the chemoreceptors (methyl-accepting chemotaxis proteins or MCP) by CheR. Also mediates the irreversible deamidation of specific glutamine residues to glutamic acid. This is Protein-glutamate methylesterase/protein-glutamine glutaminase 2 from Syntrophomonas wolfei subsp. wolfei (strain DSM 2245B / Goettingen).